Consider the following 418-residue polypeptide: MASLLGRSPSSILTCPRISSPSSTSSMSHLCFGPEKLSGRIQFNPKKNRSRYHVSVMNVATEINSVEQAKKIDSKESARPVYPFAAIVGQDEMKLCLLLNVIDPKIGGVMIMGDRGTGKSTTVRSLVDLLPEITVVSGDPYNSDPRDPECMGKEVREKVQKGEELSVIETKINMVDLPLGATEDRVCGTIDIEKALTEGVKAFEPGLLAKANRGILYVDEVNLLDDHLVDVLLDSAASGWNTVEREGISISHPARFILIGSGNPEEGELRPQLLDRFGMHAQVGTVRDAELRVKIVEERARFDSNPKEFRETYQEEQLKLQEQITTARSNLSAVQIDQDLKVKISKVCAELDVDGLRGDMVINRAARALAALQGRDQVTAEDVGIVIPNCLRHRLRKDPLESMDSGILVTEKFYEVFT.

A chloroplast-targeting transit peptide spans 1-55; the sequence is MASLLGRSPSSILTCPRISSPSSTSSMSHLCFGPEKLSGRIQFNPKKNRSRYHVS. At valine 56 the chain carries N-acetylvaline. 2 cysteine pairs are disulfide-bonded: cysteine 96-cysteine 187 and cysteine 348-cysteine 390. 113-120 is an ATP binding site; that stretch reads GDRGTGKS.

The protein belongs to the Mg-chelatase subunits D/I family. As to quaternary structure, the magnesium chelatase complex is a heterotrimer consisting of subunits CHLI, CHLD and CHLH. In terms of tissue distribution, expressed in leaves.

Its subcellular location is the plastid. The protein localises to the chloroplast. The enzyme catalyses protoporphyrin IX + Mg(2+) + ATP + H2O = Mg-protoporphyrin IX + ADP + phosphate + 3 H(+). Its pathway is porphyrin-containing compound metabolism; chlorophyll biosynthesis. Its activity is regulated as follows. Redox regulation; active in reducing conditions, inactive in oxidizing conditions. Thioredoxins f and m mediate the reversible reductive activation of oxidized CHLI2. Functionally, involved in chlorophyll biosynthesis. Catalyzes the insertion of magnesium ion into protoporphyrin IX to yield Mg-protoporphyrin IX. The reaction takes place in two steps, with an ATP-dependent activation followed by an ATP-dependent chelation step. Possesses low affinity for ATP and may play a limited role in chlorophyll biosynthesis, and contributes to the assembly of the Mg-chelatase complex. The chain is Magnesium-chelatase subunit ChlI-2, chloroplastic (CHLI2) from Arabidopsis thaliana (Mouse-ear cress).